A 1270-amino-acid chain; its full sequence is Breakpoint cluster region protein (1270 aa).

Residues 28-55 adopt a coiled-coil conformation; it reads VGDIEQELERCKASIRRLEQEVNQERFR. Disordered regions lie at residues 67 to 173, 201 to 249, 295 to 396, and 412 to 484; these read KKSY…SADA, ISSL…DYED, KSPL…RHRQ, and TGQI…LEPT. Low complexity predominate over residues 126–139; the sequence is GRPATARRPAAAAP. Phosphoserine is present on residues Ser216 and Ser237. Position 247 is a phosphotyrosine (Tyr247). 2 stretches are compositionally biased toward low complexity: residues 348 to 358 and 371 to 384; these read SSGQSSRVSPS and SPSQ…DSSS. Residues Ser358, Ser379, and Ser384 each carry the phosphoserine modification. Position 387 is a phosphothreonine (Thr387). Phosphoserine is present on residues Ser461 and Ser465. Arg473 is subject to Omega-N-methylarginine. 2 positions are modified to phosphoserine: Ser475 and Ser487. One can recognise a DH domain in the interval 497–690; it reads MRKWVLSGIL…QNFLSSINEE (194 aa). Phosphotyrosine is present on Tyr553. Thr640 is modified (phosphothreonine). Tyr643 is subject to Phosphotyrosine. Thr692 carries the post-translational modification Phosphothreonine. Residues 707-865 enclose the PH domain; it reads QLLKDSFMVE…WRESIREQQK (159 aa). The C2 domain occupies 892-1019; it reads HHIPLTINKE…QDRDWQRTVI (128 aa). Positions 1053 to 1247 constitute a Rho-GAP domain; that stretch reads VKIAVVTKRE…VMSQVQVLLY (195 aa). Ser1263 carries the phosphoserine modification.

In terms of assembly, homotetramer. Interacts with PDZK1. May interact with CCPG1. Interacts with HCK, FES/FPS, ABL1, PIK3R1 and GRB2. Interacts with SH2D5. Interacts with DLG4. Post-translationally, autophosphorylated. Phosphorylated by FES/FPS on tyrosine residues, leading to down-regulation of the BCR kinase activity. Phosphorylation by HCK is important for interaction with GRB2. Expressed in brain, including the cortex, hippocampus, cerebellum, and brainstem, as well as the spinal cord (at protein level).

Its subcellular location is the postsynaptic density. The protein localises to the cell projection. It localises to the dendritic spine. It is found in the axon. The protein resides in the synapse. It carries out the reaction L-seryl-[protein] + ATP = O-phospho-L-seryl-[protein] + ADP + H(+). It catalyses the reaction L-threonyl-[protein] + ATP = O-phospho-L-threonyl-[protein] + ADP + H(+). In terms of biological role, protein with a unique structure having two opposing regulatory activities toward small GTP-binding proteins. The C-terminus is a GTPase-activating protein (GAP) domain which stimulates GTP hydrolysis by RAC1, RAC2 and CDC42. Accelerates the intrinsic rate of GTP hydrolysis of RAC1 or CDC42, leading to down-regulation of the active GTP-bound form. The central Dbl homology (DH) domain functions as guanine nucleotide exchange factor (GEF) that modulates the GTPases CDC42, RHOA and RAC1. Promotes the conversion of CDC42, RHOA and RAC1 from the GDP-bound to the GTP-bound form. The amino terminus contains an intrinsic kinase activity. Functions as an important negative regulator of neuronal RAC1 activity. Regulates macrophage functions such as CSF1-directed motility and phagocytosis through the modulation of RAC1 activity. Plays a major role as a RHOA GEF in keratinocytes being involved in focal adhesion formation and keratinocyte differentiation. The sequence is that of Breakpoint cluster region protein from Rattus norvegicus (Rat).